We begin with the raw amino-acid sequence, 1091 residues long: ATP-dependent helicase/deoxyribonuclease subunit B (1091 aa).

Belongs to the helicase family. AddB/RexB type 2 subfamily. In terms of assembly, heterodimer of AddA and RexB. Mg(2+) serves as cofactor.

Its function is as follows. The heterodimer acts as both an ATP-dependent DNA helicase and an ATP-dependent, dual-direction single-stranded exonuclease. Recognizes the chi site generating a DNA molecule suitable for the initiation of homologous recombination. This subunit has 5' -&gt; 3' nuclease activity but not helicase activity. The sequence is that of ATP-dependent helicase/deoxyribonuclease subunit B from Streptococcus pneumoniae (strain ATCC 700669 / Spain 23F-1).